Here is a 371-residue protein sequence, read N- to C-terminus: 3-isopropylmalate dehydrogenase (371 aa).

Thr-55 is subject to Phosphothreonine. Position 78-89 (78-89) interacts with NAD(+); sequence GPEWTNPNCRPE. 4 residues coordinate substrate: Arg-96, Arg-106, Arg-135, and Asp-224. Residues Asp-224, Asp-249, and Asp-253 each coordinate Mg(2+). Residue 290 to 302 coordinates NAD(+); the sequence is GSAPDIAGKGIVN.

The protein belongs to the isocitrate and isopropylmalate dehydrogenases family. In terms of assembly, homodimer. Mg(2+) is required as a cofactor. It depends on Mn(2+) as a cofactor.

The protein localises to the cytoplasm. It catalyses the reaction (2R,3S)-3-isopropylmalate + NAD(+) = 4-methyl-2-oxopentanoate + CO2 + NADH. Its pathway is amino-acid biosynthesis; L-leucine biosynthesis; L-leucine from 3-methyl-2-oxobutanoate: step 3/4. In terms of biological role, catalyzes the oxidation of 3-carboxy-2-hydroxy-4-methylpentanoate (3-isopropylmalate) to 3-carboxy-4-methyl-2-oxopentanoate. The product decarboxylates to 4-methyl-2 oxopentanoate. This Schizosaccharomyces pombe (strain 972 / ATCC 24843) (Fission yeast) protein is 3-isopropylmalate dehydrogenase (leu1).